Consider the following 152-residue polypeptide: Nucleoside diphosphate kinase A 2 (152 aa).

ATP is bound by residues K12, F60, R88, T94, R105, and N115. H118 acts as the Pros-phosphohistidine intermediate in catalysis.

The protein belongs to the NDK family. Homohexamer. Mg(2+) serves as cofactor. In terms of processing, the N-terminus is blocked.

It localises to the cytoplasm. It is found in the cell membrane. The protein localises to the nucleus. It carries out the reaction a 2'-deoxyribonucleoside 5'-diphosphate + ATP = a 2'-deoxyribonucleoside 5'-triphosphate + ADP. The enzyme catalyses a ribonucleoside 5'-diphosphate + ATP = a ribonucleoside 5'-triphosphate + ADP. With respect to regulation, autophosphorylation at His-118 increases serine/threonine protein kinase activity of the enzyme. Interaction with the SET complex inhibits exonuclease activity. Major role in the synthesis of nucleoside triphosphates other than ATP. Possesses nucleoside-diphosphate kinase, serine/threonine-specific protein kinase, geranyl and farnesyl pyrophosphate kinase, histidine protein kinase and 3'-5' exonuclease activities. Involved in cell proliferation, differentiation and development, signal transduction, G protein-coupled receptor endocytosis, and gene expression. Required for neural development including neural patterning and cell fate determination. In Bos taurus (Bovine), this protein is Nucleoside diphosphate kinase A 2 (NME1-2).